The chain runs to 83 residues: MSGSTGERSFADIITSIRYWVIHSITIPSLFIAGWLFVSTGLAYDVFGSPRPNEYFTESRQGIPLITGRFDPLAQLDEFSRSF.

A helical transmembrane segment spans residues 21-35 (VIHSITIPSLFIAGW). H23 serves as a coordination point for heme.

The protein belongs to the PsbE/PsbF family. In terms of assembly, heterodimer of an alpha subunit and a beta subunit. PSII is composed of 1 copy each of membrane proteins PsbA, PsbB, PsbC, PsbD, PsbE, PsbF, PsbH, PsbI, PsbJ, PsbK, PsbL, PsbM, PsbT, PsbX, PsbY, PsbZ, Psb30/Ycf12, at least 3 peripheral proteins of the oxygen-evolving complex and a large number of cofactors. It forms dimeric complexes. Heme b is required as a cofactor.

The protein resides in the plastid. It is found in the chloroplast thylakoid membrane. Its function is as follows. This b-type cytochrome is tightly associated with the reaction center of photosystem II (PSII). PSII is a light-driven water:plastoquinone oxidoreductase that uses light energy to abstract electrons from H(2)O, generating O(2) and a proton gradient subsequently used for ATP formation. It consists of a core antenna complex that captures photons, and an electron transfer chain that converts photonic excitation into a charge separation. The polypeptide is Cytochrome b559 subunit alpha (Liriodendron tulipifera (Tuliptree)).